We begin with the raw amino-acid sequence, 141 residues long: MVNDTISDMLTRIRNANMAKNDLVLIPFTHINLEICQILLKEGFIQSFKTLTLDVSKYSKLNAQKNLNIVVKLKYLGRQKNSCITNLLRISKPGNRIYAKHKIPDMLGGLGIIIVSTSAGIMTDREAREQKIGGELLCSVW.

This sequence belongs to the universal ribosomal protein uS8 family. Part of the 30S ribosomal subunit.

Its subcellular location is the plastid. The protein resides in the chloroplast. Its function is as follows. One of the primary rRNA binding proteins, it binds directly to 16S rRNA central domain where it helps coordinate assembly of the platform of the 30S subunit. This Pleurastrum terricola (Filamentous green alga) protein is Small ribosomal subunit protein uS8c (rps8).